Here is an 814-residue protein sequence, read N- to C-terminus: Putative serine/threonine-protein kinase-like protein CCR3 (814 aa).

Positions 1–30 (MKRFINSTVTFSVTVTIAVIIFFLLSPVTS) are cleaved as a signal peptide. 10 N-linked (GlcNAc...) asparagine glycosylation sites follow: Asn-6, Asn-68, Asn-136, Asn-215, Asn-226, Asn-251, Asn-260, Asn-275, Asn-299, and Asn-309. The Extracellular segment spans residues 31–393 (LGSGSTYAVV…SSPPSKALTR (363 aa)). The span at 366–381 (SQFPLPPPPPPPPPSP) shows a compositional bias: pro residues. The segment at 366–388 (SQFPLPPPPPPPPPSPSTSSPPS) is disordered. A helical membrane pass occupies residues 394–414 (GLLAFAIVGSVGAFAGICSVV). The Cytoplasmic portion of the chain corresponds to 415-814 (YCLWTGVCLG…SSGICSIVSD (400 aa)). A disordered region spans residues 433 to 478 (QPTITRGGSNSRSNSSNSRSLSIRRQGSRMLSMRRQRSGTSSMKHA). Over residues 441–457 (SNSRSNSSNSRSLSIRR) the composition is skewed to low complexity. The Protein kinase domain maps to 496–794 (FSLENKIGSG…DIVGNLERAL (299 aa)). ATP contacts are provided by residues 502 to 510 (IGSGSFGVV) and Lys-524. Asp-631 serves as the catalytic Proton acceptor.

This sequence belongs to the protein kinase superfamily. Ser/Thr protein kinase family. In terms of assembly, homodimer. As to expression, expressed in roots, leaves, shoot apical meristems (SAM), and floral buds.

The protein localises to the membrane. The enzyme catalyses L-seryl-[protein] + ATP = O-phospho-L-seryl-[protein] + ADP + H(+). It catalyses the reaction L-threonyl-[protein] + ATP = O-phospho-L-threonyl-[protein] + ADP + H(+). Serine/threonine-protein kinase. The chain is Putative serine/threonine-protein kinase-like protein CCR3 (CCR3) from Arabidopsis thaliana (Mouse-ear cress).